The sequence spans 260 residues: uncharacterized protein (260 aa).

The first 22 residues, 1–22 (MGYSKRFALYISILILIVMVAG), serve as a signal peptide directing secretion. C23 is lipidated: N-palmitoyl cysteine. The S-diacylglycerol cysteine moiety is linked to residue C23.

The protein belongs to the staphylococcal tandem lipoprotein family.

Its subcellular location is the cell membrane. This is an uncharacterized protein from Staphylococcus aureus (strain N315).